A 29-amino-acid chain; its full sequence is Snake venom metalloproteinase bothrolysin (29 aa).

Positions 6-29 constitute a Peptidase M12B domain; the sequence is RYIELFLVVDSGMFMKYNGNSDKI. Residue Glu9 coordinates Ca(2+).

Belongs to the venom metalloproteinase (M12B) family. Requires Zn(2+) as cofactor. In terms of tissue distribution, expressed by the venom gland.

The protein localises to the secreted. It catalyses the reaction Cleavage of 4-Gln-|-His-5, 9-Ser-|-His-10 and 14-Ala-|-Leu-15 of insulin B chain and Pro-|-Phe of angiotensin I.. Functionally, snake venom zinc metalloproteinase that impairs hemostasis in the envenomed animal. The polypeptide is Snake venom metalloproteinase bothrolysin (Bothrops jararaca (Jararaca)).